The primary structure comprises 534 residues: C-type lectin domain family 18 member A (534 aa).

The tract at residues 47–88 is disordered; the sequence is GALPVAGKPEPMARSLASAPVSPWHHMDRGSTTPAKARSHSA. The SCP domain maps to 139–270; sequence LTAHNRLRSR…EAMEAFVCAY (132 aa). Positions 316 to 349 constitute an EGF-like domain; sequence PRNPCRMSCRNLGHLNISTCRCHCQPGYTGRYCQ. 4 disulfides stabilise this stretch: Cys-324–Cys-337, Cys-339–Cys-348, Cys-415–Cys-520, and Cys-496–Cys-512. The C-type lectin domain occupies 394–521; it reads IDGDCFMVSP…CKTRNRYICQ (128 aa).

Its subcellular location is the secreted. The sequence is that of C-type lectin domain family 18 member A (Clec18a) from Mus musculus (Mouse).